The chain runs to 519 residues: Cyclic AMP-responsive element-binding protein 3-like protein 1 (519 aa).

Residues 1–60 (MDAVLEPFPADRLFPGSSFLDLGDLNESDFLNNAHFPEHLDHFTENMEDFSNDLFSSFFD) are required for transcriptional activation. Residues 1–374 (MDAVLEPFPA…YKMAATQTGT (374 aa)) lie on the Cytoplasmic side of the membrane. Residues 71–98 (LDMELDSPTPGIQAEHSYSLSGDSAPQS) are disordered. The segment covering 86–97 (HSYSLSGDSAPQ) has biased composition (polar residues). Lys-184 is covalently cross-linked (Glycyl lysine isopeptide (Lys-Gly) (interchain with G-Cter in SUMO2)). Residues 200–259 (DLVQMPPTPPSSHGSDSDGSQSPRSLPPSSPVRPMARSSTAISTSPLLTAPHKLQGTSGP) form a disordered region. Residues 210-223 (SSHGSDSDGSQSPR) show a composition bias toward low complexity. Polar residues predominate over residues 236–246 (RSSTAISTSPL). The bZIP domain maps to 290-353 (ALKRVRRKIK…RTLLQQLQKL (64 aa)). Positions 292-321 (KRVRRKIKNKISAQESRRKKKEYVECLEKK) are basic motif. The interval 332–353 (LWKKVETLENANRTLLQQLQKL) is leucine-zipper. The helical; Signal-anchor for type II membrane protein transmembrane segment at 375-395 (CLMVAALCFVLVLGSLVPCLP) threads the bilayer. The short motif at 392 to 395 (PCLP) is the MBTPS2 recognition element. The Lumenal segment spans residues 396–519 (EFSSGSQTVK…LGPNTTIKLS (124 aa)). An MBTPS1 recognition motif is present at residues 423 to 426 (RSLL). The disordered stretch occupies residues 484-519 (EAWPKDGGNGTSPDFSHSKEWFHDRDLGPNTTIKLS). Asn-492 carries an N-linked (GlcNAc...) asparagine glycan. The span at 499–510 (SHSKEWFHDRDL) shows a compositional bias: basic and acidic residues. The N-linked (GlcNAc...) asparagine glycan is linked to Asn-513.

It belongs to the bZIP family. ATF subfamily. Interacts with SMAD4, the interaction takes place upon TGFB1 induction and SMAD4 acts as a CREB3L1 coactivator to induce the expression of genes involved in assembly of collagen extracellular matrix. In terms of processing, upon ER stress or DNA damage, translocated to the Golgi apparatus, where it is processed by regulated intramembrane proteolysis (RIP) to release the cytosol-facing N-terminal transcription factor domain. The cleavage is performed sequentially by site-1 and site-2 proteases (S1P/MBTPS1 and S2P/MBTPS2). RIP is induced by TGFB1 and ceramide. N-glycosylated. Post-translationally, ubiquitinated by HRD1/SYVN1; undergoes 'Lys-48'-linked ubiquitination, followed by rapid proteasomal degradation under normal conditions. Upon ER stress, SYVN1 E3 ubiquitin-protein ligase dissociates from its substrate, ubiquitination does not occur and CREB3L1 is stabilized. Expressed in several tissues, with highest levels in pancreas and prostate. Expressed at relatively lower levels in brain.

Its subcellular location is the endoplasmic reticulum membrane. The protein resides in the nucleus. Functionally, precursor of the transcription factor form (Processed cyclic AMP-responsive element-binding protein 3-like protein 1), which is embedded in the endoplasmic reticulum membrane with N-terminal DNA-binding and transcription activation domains oriented toward the cytosolic face of the membrane. In response to ER stress or DNA damage, transported to the Golgi, where it is cleaved in a site-specific manner by resident proteases S1P/MBTPS1 and S2P/MBTPS2. The released N-terminal cytosolic domain is translocated to the nucleus where it activates transcription of specific target genes involved in the cell-cycle progression inhibition. In terms of biological role, transcription factor involved in cell type specific DNA damage and unfolded protein response (UPR). Binds the DNA consensus sequence 5'-GTGXGCXGC-3'. Plays a critical role in bone formation through the transcription of COL1A1, and possibly COL1A2, and the secretion of bone matrix proteins. Directly binds to the UPR element (UPRE)-like sequence in an osteoblast-specific COL1A1 promoter region and induces its transcription. Does not regulate COL1A1 in other tissues, such as skin. Required to protect astrocytes from ER stress-induced cell death. In astrocytes, binds to the cAMP response element (CRE) of the BiP/HSPA5 promoter and participate in its transcriptional activation. In astrocytes and osteoblasts, upon DNA damage, inhibits cell-cycle progression after G2/M phase by binding to promoters and activating transcription of genes encoding cell-cycle inhibitors, such as p21/CDKN1A. Required for TGFB1 to activate genes involved in the assembly of collagen extracellular matrix. Its function is as follows. (Microbial infection) May play a role in limiting virus spread by inhibiting proliferation of virus-infected cells. Upon infection with diverse DNA and RNA viruses, inhibits cell-cycle progression by binding to promoters and activating transcription of genes encoding cell-cycle inhibitors, such as p21/CDKN1A. This Homo sapiens (Human) protein is Cyclic AMP-responsive element-binding protein 3-like protein 1.